We begin with the raw amino-acid sequence, 459 residues long: Methionine aminopeptidase 2-1 (459 aa).

Residues 1–12 (MGSKSPEDHRQG) are compositionally biased toward basic and acidic residues. Positions 1 to 79 (MGSKSPEDHR…RKRNKKKSKK (79 aa)) are disordered. The segment covering 43 to 54 (GQDEDGDDDDDE) has biased composition (acidic residues). Positions 67-79 (KKKRKRNKKKSKK) are enriched in basic residues. His-210 is a substrate binding site. 3 residues coordinate a divalent metal cation: Asp-231, Asp-242, and His-311. His-319 contributes to the substrate binding site. Residues Glu-344 and Glu-440 each contribute to the a divalent metal cation site.

It belongs to the peptidase M24A family. Methionine aminopeptidase eukaryotic type 2 subfamily. The cofactor is Co(2+). Zn(2+) is required as a cofactor. It depends on Mn(2+) as a cofactor. Requires Fe(2+) as cofactor.

It is found in the cytoplasm. The enzyme catalyses Release of N-terminal amino acids, preferentially methionine, from peptides and arylamides.. Its function is as follows. Cotranslationally removes the N-terminal methionine from nascent proteins. The N-terminal methionine is often cleaved when the second residue in the primary sequence is small and uncharged (Met-Ala-, Cys, Gly, Pro, Ser, Thr, or Val). The polypeptide is Methionine aminopeptidase 2-1 (Pyrenophora tritici-repentis (strain Pt-1C-BFP) (Wheat tan spot fungus)).